The following is a 392-amino-acid chain: Phospho-N-acetylmuramoyl-pentapeptide-transferase (392 aa).

The next 10 membrane-spanning stretches (helical) occupy residues 29–49, 76–96, 100–120, 137–157, 192–212, 225–245, 262–282, 289–309, 314–334, and 369–389; these read AVLA…WVIG, TMGG…WFDL, FVWI…VDDW, YLWQ…CISE, AVSY…VIVG, GLAI…AYVT, SGEL…FLWF, VFMG…IAII, IVLA…MLQV, and QVVV…LSTL.

This sequence belongs to the glycosyltransferase 4 family. MraY subfamily. Mg(2+) serves as cofactor.

It localises to the cell inner membrane. It catalyses the reaction UDP-N-acetyl-alpha-D-muramoyl-L-alanyl-gamma-D-glutamyl-meso-2,6-diaminopimeloyl-D-alanyl-D-alanine + di-trans,octa-cis-undecaprenyl phosphate = di-trans,octa-cis-undecaprenyl diphospho-N-acetyl-alpha-D-muramoyl-L-alanyl-D-glutamyl-meso-2,6-diaminopimeloyl-D-alanyl-D-alanine + UMP. It functions in the pathway cell wall biogenesis; peptidoglycan biosynthesis. In terms of biological role, catalyzes the initial step of the lipid cycle reactions in the biosynthesis of the cell wall peptidoglycan: transfers peptidoglycan precursor phospho-MurNAc-pentapeptide from UDP-MurNAc-pentapeptide onto the lipid carrier undecaprenyl phosphate, yielding undecaprenyl-pyrophosphoryl-MurNAc-pentapeptide, known as lipid I. This chain is Phospho-N-acetylmuramoyl-pentapeptide-transferase, found in Verminephrobacter eiseniae (strain EF01-2).